The sequence spans 402 residues: MHIKPIIQGVVARSAHPYGCEQAVLQQIQYVKQANPIKSGPKRVLILGASSGFGLAARIALTFGGAQADTIGVSFERAPSETQTGSAGYYNNLFFKQHAEQAGRIAVNLEGDVFSVDMREQVIEAIETYFEGEVDLIIYSIASGMRRKPRSEKADPEFWRSAIKPIGEAVSGATLLLENDTWIETTLQPASEEEIEGTLRVMGGDDWENWIDTLINAESLAEGCKTIAFSYMGPDVTHPIYLDGTLGRAKIDLHQTSHALNLKLANFDGGAYAVVCKALVTKASVFIPGLSPYLLALYQVMKNKGTHEGCIEQMQRLFSDKLYGHSRIPLDSERLIRMDDWEMNPDTQVQVRERLQQMNASNFQQLGDYAGFKREFMQLNGFEFDQIDYSQSVDMHNFINKK.

NAD(+)-binding positions include 48–53, 75–76, 112–113, and 141–142; these read GASSGF, FE, DV, and IA. Tyr-231 contacts substrate. Tyr-241 serves as the catalytic Proton donor. NAD(+) contacts are provided by residues Lys-250 and 279-281; that span reads LVT.

Belongs to the TER reductase family. Monomer.

The catalysed reaction is a 2,3-saturated acyl-[ACP] + NAD(+) = a (2E)-enoyl-[ACP] + NADH + H(+). Its pathway is lipid metabolism; fatty acid biosynthesis. Functionally, involved in the final reduction of the elongation cycle of fatty acid synthesis (FAS II). Catalyzes the reduction of a carbon-carbon double bond in an enoyl moiety that is covalently linked to an acyl carrier protein (ACP). The polypeptide is Enoyl-[acyl-carrier-protein] reductase [NADH] (Vibrio cholerae serotype O1 (strain ATCC 39541 / Classical Ogawa 395 / O395)).